Here is a 482-residue protein sequence, read N- to C-terminus: MTSFELESPIEIKTDPTDLDQESDSFVQEISRFNKALEQRFRDKMRLHESLSRKIVSFQANKSKPQYRWFKYKEAFSVDLVNQLIFEYEKKSFERILDPFAGAGTMLFACSDAGIQADGIEVLPIGQEIIEVRKIIQRQFRREDFLRLIEWYKQKPWNQHNNRKYLNRLRITDGAYPPETEASIERFLFSIEKENILVKQVLRFALLCILESISYTRKDGQYLRWDKRAFRKSGSDKFDKGKILDFDEAITEQIKLILNDSFDLISNTLFCYGTQRSGINLFNASCLKILPEFEQDFYDCIITSPPYCNRYDYTRTYALELALLGVGERDIVQLRQDMLSCTVENKEKSLIHNWQEALRILDKQELLQSILRFLERELERKKLNNNGIPRMIKGYFYEMACVIIECFRVLKNGSPLFMVNDNVRYAGIDISVDLILSNIAEEIGFNVEKILVLPTGKGNSSQQMGTHGRKTLRKCVYVWRKP.

This sequence belongs to the N(4)/N(6)-methyltransferase family. N(4) subfamily.

The catalysed reaction is a 2'-deoxycytidine in DNA + S-adenosyl-L-methionine = an N(4)-methyl-2'-deoxycytidine in DNA + S-adenosyl-L-homocysteine + H(+). Its function is as follows. An alpha subtype methylase that recognizes the double-stranded sequence 5'-CYCGRG-3', methylates C-1 on both strands, and protects the DNA from cleavage by the AvaI endonuclease. This is Type II methyltransferase M.AvaI from Anabaena variabilis.